A 399-amino-acid chain; its full sequence is Argininosuccinate synthase (399 aa).

Residues Ala-10–Ser-18 and Ala-38 contribute to the ATP site. Tyr-89 is a binding site for L-citrulline. Gly-119 lines the ATP pocket. 3 residues coordinate L-aspartate: Thr-121, Asn-125, and Asp-126. Position 125 (Asn-125) interacts with L-citrulline. Residues Arg-129, Ser-177, Ser-186, Glu-262, and Tyr-274 each contribute to the L-citrulline site.

Belongs to the argininosuccinate synthase family. Type 1 subfamily. Homotetramer.

It localises to the cytoplasm. It carries out the reaction L-citrulline + L-aspartate + ATP = 2-(N(omega)-L-arginino)succinate + AMP + diphosphate + H(+). Its pathway is amino-acid biosynthesis; L-arginine biosynthesis; L-arginine from L-ornithine and carbamoyl phosphate: step 2/3. This is Argininosuccinate synthase from Picosynechococcus sp. (strain ATCC 27264 / PCC 7002 / PR-6) (Agmenellum quadruplicatum).